A 318-amino-acid chain; its full sequence is Myoblast determination protein 1 (318 aa).

A Peptide (Met-Gly) (interchain with G-Cter in ubiquitin) cross-link involves residue M1. K104 carries the post-translational modification N6-methyllysine; by EHMT2. In terms of domain architecture, bHLH spans 109–160; the sequence is DRRKAATMRERRRLSKVNEAFETLKRCTSSNPNQRLPKVEILRNAIRYIEGL. 2 disordered regions span residues 174–224 and 266–318; these read AAAA…RRRN and APAL…YQVL. Polar residues predominate over residues 197–207; sequence SDASSPRSNCS. The segment covering 266–276 has biased composition (low complexity); the sequence is APALLLADAPP.

As to quaternary structure, efficient DNA binding requires dimerization with another bHLH protein. Seems to form active heterodimers with ITF-2. Interacts with SUV39H1. Interacts with DDX5. Interacts with CHD2. Interacts with TSC22D3. Interacts with SETD3. Interacts with P-TEFB complex; promotes the transcriptional activity of MYOD1 through its CDK9-mediated phosphorylation. Interacts with CSRP3. Interacts with NUPR1. In terms of processing, phosphorylated by CDK9. This phosphorylation promotes its function in muscle differentiation. Post-translationally, acetylated by a complex containing EP300 and PCAF. The acetylation is essential to activate target genes. Conversely, its deacetylation by SIRT1 inhibits its function. Ubiquitinated on the N-terminus; which is required for proteasomal degradation. In terms of processing, methylation at Lys-104 by EHMT2/G9a inhibits myogenic activity.

Its subcellular location is the nucleus. Its function is as follows. Acts as a transcriptional activator that promotes transcription of muscle-specific target genes and plays a role in muscle differentiation. Together with MYF5 and MYOG, co-occupies muscle-specific gene promoter core region during myogenesis. Induces fibroblasts to differentiate into myoblasts. Interacts with and is inhibited by the twist protein. This interaction probably involves the basic domains of both proteins. The sequence is that of Myoblast determination protein 1 (MYOD1) from Bos taurus (Bovine).